Reading from the N-terminus, the 361-residue chain is Carbamoyl phosphate synthase small chain (361 aa).

The interval methionine 1–aspartate 173 is CPSase. L-glutamine contacts are provided by serine 45, glycine 225, and glycine 227. In terms of domain architecture, Glutamine amidotransferase type-1 spans glutamate 177–histidine 361. Cysteine 252 (nucleophile) is an active-site residue. The L-glutamine site is built by leucine 253, glutamine 256, asparagine 294, glycine 296, and phenylalanine 297. Catalysis depends on residues histidine 337 and glutamate 339.

This sequence belongs to the CarA family. In terms of assembly, composed of two chains; the small (or glutamine) chain promotes the hydrolysis of glutamine to ammonia, which is used by the large (or ammonia) chain to synthesize carbamoyl phosphate. Tetramer of heterodimers (alpha,beta)4.

The enzyme catalyses hydrogencarbonate + L-glutamine + 2 ATP + H2O = carbamoyl phosphate + L-glutamate + 2 ADP + phosphate + 2 H(+). It catalyses the reaction L-glutamine + H2O = L-glutamate + NH4(+). It functions in the pathway amino-acid biosynthesis; L-arginine biosynthesis; carbamoyl phosphate from bicarbonate: step 1/1. The protein operates within pyrimidine metabolism; UMP biosynthesis via de novo pathway; (S)-dihydroorotate from bicarbonate: step 1/3. Small subunit of the glutamine-dependent carbamoyl phosphate synthetase (CPSase). CPSase catalyzes the formation of carbamoyl phosphate from the ammonia moiety of glutamine, carbonate, and phosphate donated by ATP, constituting the first step of 2 biosynthetic pathways, one leading to arginine and/or urea and the other to pyrimidine nucleotides. The small subunit (glutamine amidotransferase) binds and cleaves glutamine to supply the large subunit with the substrate ammonia. The chain is Carbamoyl phosphate synthase small chain from Methanopyrus kandleri (strain AV19 / DSM 6324 / JCM 9639 / NBRC 100938).